The following is a 251-amino-acid chain: Hydroxyacylglutathione hydrolase (251 aa).

Zn(2+) is bound by residues His-53, His-55, Asp-57, His-58, His-109, Asp-126, and His-164.

It belongs to the metallo-beta-lactamase superfamily. Glyoxalase II family. In terms of assembly, monomer. Requires Zn(2+) as cofactor.

The catalysed reaction is an S-(2-hydroxyacyl)glutathione + H2O = a 2-hydroxy carboxylate + glutathione + H(+). Its pathway is secondary metabolite metabolism; methylglyoxal degradation; (R)-lactate from methylglyoxal: step 2/2. Thiolesterase that catalyzes the hydrolysis of S-D-lactoyl-glutathione to form glutathione and D-lactic acid. The sequence is that of Hydroxyacylglutathione hydrolase from Wigglesworthia glossinidia brevipalpis.